A 246-amino-acid chain; its full sequence is Transcription factor MYB113 (246 aa).

HTH myb-type domains are found at residues 5–61 (PKGL…KPSI) and 62–112 (KRGK…SKKH). 2 DNA-binding regions (H-T-H motif) span residues 33–57 (WHRV…LNYL) and 85–108 (WSLI…NTHL).

As to quaternary structure, interacts with BHLH002/EGL3/MYC146, BHLH012/MYC1 and BHLH042/TT8.

The protein resides in the nucleus. Functionally, transcription activator, when associated with BHLH002/EGL3/MYC146, BHLH012/MYC1, or BHLH042/TT8. This is Transcription factor MYB113 (MYB113) from Arabidopsis thaliana (Mouse-ear cress).